The chain runs to 225 residues: NAD(P)H-quinone oxidoreductase subunit K, chloroplastic (225 aa).

[4Fe-4S] cluster-binding residues include Cys-43, Cys-44, Cys-108, and Cys-139.

This sequence belongs to the complex I 20 kDa subunit family. As to quaternary structure, NDH is composed of at least 16 different subunits, 5 of which are encoded in the nucleus. [4Fe-4S] cluster is required as a cofactor.

The protein localises to the plastid. Its subcellular location is the chloroplast thylakoid membrane. The enzyme catalyses a plastoquinone + NADH + (n+1) H(+)(in) = a plastoquinol + NAD(+) + n H(+)(out). The catalysed reaction is a plastoquinone + NADPH + (n+1) H(+)(in) = a plastoquinol + NADP(+) + n H(+)(out). NDH shuttles electrons from NAD(P)H:plastoquinone, via FMN and iron-sulfur (Fe-S) centers, to quinones in the photosynthetic chain and possibly in a chloroplast respiratory chain. The immediate electron acceptor for the enzyme in this species is believed to be plastoquinone. Couples the redox reaction to proton translocation, and thus conserves the redox energy in a proton gradient. This Eucalyptus globulus subsp. globulus (Tasmanian blue gum) protein is NAD(P)H-quinone oxidoreductase subunit K, chloroplastic.